The primary structure comprises 398 residues: Neuroplastin (398 aa).

The first 28 residues, 1–28, serve as a signal peptide directing secretion; the sequence is MSGSSLPSALALSLLLVSGSLLPGPGAA. Ig-like domains lie at 29 to 134, 148 to 235, and 238 to 329; these read QNAG…PSIT, PRIV…IEVK, and PDIT…SVVT. Residues 29-339 lie on the Extracellular side of the membrane; the sequence is QNAGFVKSPM…VLRVRSHLAP (311 aa). The cysteines at positions 52 and 116 are disulfide-linked. Residues 149-161 are narpin; mediates binding with FGFR1 and has antidepressant-like activity; that stretch reads RIVTSEEVIIRDS. An intrachain disulfide couples Cys170 to Cys218. N-linked (GlcNAc...) asparagine glycosylation is found at Asn171, Asn197, Asn229, Asn284, Asn296, and Asn317. A disulfide bridge links Cys259 with Cys316. Residues 340–360 traverse the membrane as a helical segment; the sequence is LWPFLGILAEIIILVVIIVVY. The Cytoplasmic portion of the chain corresponds to 361–398; the sequence is EKRKRPDEVPDDDEPAGPMKTNSTNNHKDKNLRQRNTN. The segment at 365–398 is disordered; that stretch reads RPDEVPDDDEPAGPMKTNSTNNHKDKNLRQRNTN.

In terms of assembly, interacts with ATP2B1; this interaction stabilizes ATP2B1 and increases ATPase activity; this interaction controls T cell calcium homeostasis following T cell activation. Interacts with XKR8; promoting its localization at the cell membrane. Isoform 1 is ubiquitously expressed. Isoform 2 is expressed in brain cortex and cerebellum (at protein level).

It is found in the cell membrane. Its subcellular location is the postsynaptic density. Its function is as follows. Probable homophilic and heterophilic cell adhesion molecule involved in long term potentiation at hippocampal excitatory synapses through activation of p38MAPK. May also regulate neurite outgrowth by activating the FGFR1 signaling pathway. May play a role in synaptic plasticity. Also acts as a chaperone for ATP2B1; stabilizes ATP2B1 and increases its ATPase activity. Promotes localization of XKR8 at the cell membrane. This chain is Neuroplastin (NPTN), found in Homo sapiens (Human).